The following is a 115-amino-acid chain: Ribonuclease P protein component (115 aa).

Belongs to the RnpA family. As to quaternary structure, consists of a catalytic RNA component (M1 or rnpB) and a protein subunit.

The enzyme catalyses Endonucleolytic cleavage of RNA, removing 5'-extranucleotides from tRNA precursor.. Its function is as follows. RNaseP catalyzes the removal of the 5'-leader sequence from pre-tRNA to produce the mature 5'-terminus. It can also cleave other RNA substrates such as 4.5S RNA. The protein component plays an auxiliary but essential role in vivo by binding to the 5'-leader sequence and broadening the substrate specificity of the ribozyme. This is Ribonuclease P protein component from Buchnera aphidicola subsp. Acyrthosiphon pisum (strain APS) (Acyrthosiphon pisum symbiotic bacterium).